Consider the following 316-residue polypeptide: Probable cell division protein WhiA (316 aa).

A DNA-binding region (H-T-H motif) is located at residues serine 276 to lysine 309.

It belongs to the WhiA family.

Its function is as follows. Involved in cell division and chromosome segregation. In Bifidobacterium longum subsp. infantis (strain ATCC 15697 / DSM 20088 / JCM 1222 / NCTC 11817 / S12), this protein is Probable cell division protein WhiA.